Consider the following 266-residue polypeptide: ES1 protein homolog, mitochondrial (266 aa).

The N-terminal 39 residues, 1-39 (MAAVRVLVSPRLASALLPLSGRHRTTSQRAAIHSSAPRP), are a transit peptide targeting the mitochondrion. Residues lysine 149, lysine 155, and lysine 162 each carry the N6-acetyllysine modification. N6-acetyllysine; alternate is present on lysine 201. Lysine 201 is subject to N6-succinyllysine; alternate. Position 217 is an N6-acetyllysine (lysine 217). An N6-acetyllysine; alternate mark is found at lysine 221 and lysine 231. Lysine 221 and lysine 231 each carry N6-succinyllysine; alternate.

This sequence belongs to the ES1 family.

The protein resides in the mitochondrion. The polypeptide is ES1 protein homolog, mitochondrial (Rattus norvegicus (Rat)).